Reading from the N-terminus, the 524-residue chain is Dihydromonacolin L monooxygenase mokC (524 aa).

Residues 1-25 (MTVPTDTVSRRLQSLAWSDIKQHAP) lie on the Cytoplasmic side of the membrane. The helical; Signal-anchor for type II membrane protein transmembrane segment at 26–47 (WLPSSRTLVSGFLCLILLQILY) threads the bilayer. Residues 48-524 (SRGRKSDLRV…LMMRRRDEDL (477 aa)) lie on the Lumenal side of the membrane. 2 N-linked (GlcNAc...) asparagine glycosylation sites follow: Asn-396 and Asn-401. Residue Cys-467 coordinates heme.

It belongs to the cytochrome P450 family. Requires heme as cofactor.

The protein localises to the endoplasmic reticulum membrane. The enzyme catalyses dihydromonacolin L carboxylate + reduced [NADPH--hemoprotein reductase] + O2 = monacolin L carboxylate + oxidized [NADPH--hemoprotein reductase] + 2 H2O + H(+). It carries out the reaction monacolin L carboxylate + reduced [NADPH--hemoprotein reductase] + O2 = monacolin J carboxylate + oxidized [NADPH--hemoprotein reductase] + H2O + H(+). It participates in polyketide biosynthesis; lovastatin biosynthesis. In terms of biological role, cytochrome P450 monooxygenase; part of the gene cluster that mediates the biosynthesis of monakolin K, also known as lovastatin, and which acts as a potent competitive inhibitor of HMG-CoA reductase. Monakolin K biosynthesis is performed in two stages. The first stage is catalyzed by the nonaketide synthase mokA, which belongs to type I polyketide synthases and catalyzes the iterative nine-step formation of the polyketide. This PKS stage is completed by the action of dehydrogenase mokE, which catalyzes the NADPH-dependent reduction of the unsaturated tetra-, penta- and heptaketide intermediates that arise during the mokA-mediated biosynthesis of the nonaketide chain and leads to dihydromonacolin L. Covalently bound dihydromonacolin L is released from mokA by the mokD esterase. Conversion of dihydromonacolin L into monacolin L and then monacolin J is subsequently performed with the participation of molecular oxygen and P450 monoogygenase mokC. Finally, mokF performs the conversion of monacoline J to monacoline K through the addition of the side-chain diketide moiety (2R)-2-methylbutanoate produced by the diketide synthase mokB. The polypeptide is Dihydromonacolin L monooxygenase mokC (Monascus pilosus (Red mold)).